The primary structure comprises 485 residues: Terminase, large subunit (485 aa).

ATP contacts are provided by Q97 and Q99. The Walker A motif signature appears at 124–131 (TSEFRGKS). The short motif at 145–150 (FVILDE) is the Walker B motif element. E150 serves as the catalytic For ATPase activity. The interval 256–438 (SNSVFSGLDM…DIVMSLALAY (183 aa)) is nuclease. Mg(2+) contacts are provided by D294, D347, and D429.

The protein belongs to the Tequatrovirus large terminase family. In terms of assembly, interacts with the terminase small subunit; the active complex is probably heterooligomeric. Interacts with the portal protein. The cofactor is Mg(2+).

In terms of biological role, the terminase large subunit acts as an ATP driven molecular motor necessary for viral DNA translocation into empty capsids and as an endonuclease that cuts the viral genome to initiate and to end a packaging reaction The terminase lies at a unique vertex of the procapsid and is composed of two subunits, a small terminase subunit involved in viral DNA recognition (packaging sequence), and a large terminase subunit possessing endonucleolytic and ATPase activities. Both terminase subunits heterooligomerize and are docked on the portal protein to form the packaging machine. The terminase large subunit exhibits endonuclease activity and cleaves the viral genome concatemer. Once the capsid is packaged with the DNA, the terminase complex is substituted by the tail. In Thermus thermophilus (Thermus thermophilus phage G20c), this protein is Terminase, large subunit.